A 216-amino-acid polypeptide reads, in one-letter code: uncharacterized protein (216 aa).

Its subcellular location is the plastid. The protein localises to the chloroplast. This is an uncharacterized protein from Pyropia yezoensis (Susabi-nori).